A 62-amino-acid chain; its full sequence is E3 SUMO-protein ligase EGR2 (62 aa).

C2H2-type zinc fingers lie at residues 1–21 (AEGC…IRIH), 27–49 (FQCA…IRTH), and 55–62 (FACDYCGR).

It belongs to the EGR C2H2-type zinc-finger protein family. As to quaternary structure, interacts with HCFC1. Interacts with WWP2. Interacts with UBC9. Interacts with CITED1. Interacts (via phosphorylated form) with SFN. Ubiquitinated by WWP2 leading to proteasomal degradation. Post-translationally, acetylated. May be deacetylated by HDAC6, HDAC10 or SIRT1.

The protein localises to the nucleus. It functions in the pathway protein modification; protein sumoylation. Sequence-specific DNA-binding transcription factor. Plays a role in hindbrain segmentation by regulating the expression of a subset of homeobox containing genes and in Schwann cell myelination by regulating the expression of genes involved in the formation and maintenance of myelin. Binds to two EGR2-consensus sites EGR2A (5'-CTGTAGGAG-3') and EGR2B (5'-ATGTAGGTG-3') in the HOXB3 enhancer and promotes HOXB3 transcriptional activation. Binds to specific DNA sites located in the promoter region of HOXA4, HOXB2 and ERBB2. Regulates hindbrain segmentation by controlling the expression of Hox genes, such as HOXA4, HOXB3 and HOXB2, and thereby specifying odd and even rhombomeres. Promotes the expression of HOXB3 in the rhombomere r5 in the hindbrain. Regulates myelination in the peripheral nervous system after birth, possibly by regulating the expression of myelin proteins, such as MPZ, and by promoting the differentiation of Schwann cells. Involved in the development of the jaw openener musculature, probably by playing a role in its innervation through trigeminal motor neurons. May play a role in adipogenesis, possibly by regulating the expression of CEBPB. In terms of biological role, E3 SUMO-protein ligase helping SUMO1 conjugation to its coregulators NAB1 and NAB2, whose sumoylation down-regulates EGR2 transcriptional activity. The polypeptide is E3 SUMO-protein ligase EGR2 (EGR2) (Cerdocyon thous (Crab-eating fox)).